Consider the following 221-residue polypeptide: Early nodulin-like protein 4 (221 aa).

A signal peptide spans 1–21 (MVFVKMTDVYLMIVMLMGLGF). The Phytocyanin domain maps to 29-130 (HKFYVGGRDG…GQKLAVTVMS (102 aa)). Residues Asn-59 and Asn-85 are each glycosylated (N-linked (GlcNAc...) asparagine). The cysteines at positions 84 and 118 are disulfide-linked. Residues 130-185 (STGHHSHTPRHPSPSPSPSASPVRKALLSPAPIPVHKALSSPAPTPGVDPSHSEVL) form a disordered region. Asn-197 is lipidated: GPI-anchor amidated asparagine. Positions 198-221 (LAGSVAPGVISLGLVLVIMISSMV) are cleaved as a propeptide — removed in mature form.

The protein belongs to the early nodulin-like (ENODL) family. Confined to flowers.

It is found in the cell membrane. Functionally, may act as a carbohydrate transporter. The polypeptide is Early nodulin-like protein 4 (Arabidopsis thaliana (Mouse-ear cress)).